Here is a 551-residue protein sequence, read N- to C-terminus: Steroid transmembrane transporter SLC22A24 (551 aa).

Helical transmembrane passes span Phe-16–Val-36, Ser-146–Leu-166, Phe-174–Pro-194, Phe-204–Leu-222, Ala-235–Ile-255, His-260–Ser-280, Ile-350–Asn-370, Val-378–Phe-398, Ile-410–Met-430, Leu-435–Leu-455, Leu-469–Leu-489, and Leu-496–Pro-516. Residues Pro-524–Phe-551 are disordered. Residues Val-530 to Val-545 are compositionally biased toward basic and acidic residues.

In terms of tissue distribution, localized to the kidney. Mainly expressed in the late segments of proximal tubules.

It is found in the cell membrane. It catalyses the reaction estrone 3-sulfate(out) + glutarate(in) = estrone 3-sulfate(in) + glutarate(out). It carries out the reaction 17beta-estradiol 17-O-(beta-D-glucuronate)(out) + glutarate(in) = 17beta-estradiol 17-O-(beta-D-glucuronate)(in) + glutarate(out). The enzyme catalyses dehydroepiandrosterone 3-sulfate(out) + glutarate(in) = dehydroepiandrosterone 3-sulfate(in) + glutarate(out). In terms of biological role, renal transmembrane organic anion/dicarboxylate exchanger that participates in the reabsorption of conjugated steroids, as well as bile acids, driven by an outward gradient of dicarboxylates such as glutarate or succinate. Transports estrone 3-sulfate and estradiol-17-glucuronide (17beta-estradiol 17-O-(beta-D-glucuronate)), but not androstanediol glucuronide (5alpha-androstane-3alpha,17beta-diol 3-O-(beta-D-glucuronate)), nor taurocholate. Prefers sulfate conjugates of steroids rather than glucuronide conjugates. The sequence is that of Steroid transmembrane transporter SLC22A24 from Rattus norvegicus (Rat).